We begin with the raw amino-acid sequence, 167 residues long: SsrA-binding protein (167 aa).

A disordered region spans residues 137–167 (GKQSHDKRDAAKERDWQRDKQRVMRRHNRDA). The span at 139–158 (QSHDKRDAAKERDWQRDKQR) shows a compositional bias: basic and acidic residues.

This sequence belongs to the SmpB family.

The protein resides in the cytoplasm. Its function is as follows. Required for rescue of stalled ribosomes mediated by trans-translation. Binds to transfer-messenger RNA (tmRNA), required for stable association of tmRNA with ribosomes. tmRNA and SmpB together mimic tRNA shape, replacing the anticodon stem-loop with SmpB. tmRNA is encoded by the ssrA gene; the 2 termini fold to resemble tRNA(Ala) and it encodes a 'tag peptide', a short internal open reading frame. During trans-translation Ala-aminoacylated tmRNA acts like a tRNA, entering the A-site of stalled ribosomes, displacing the stalled mRNA. The ribosome then switches to translate the ORF on the tmRNA; the nascent peptide is terminated with the 'tag peptide' encoded by the tmRNA and targeted for degradation. The ribosome is freed to recommence translation, which seems to be the essential function of trans-translation. The polypeptide is SsrA-binding protein (Xanthomonas campestris pv. campestris (strain 8004)).